The following is a 132-amino-acid chain: Large ribosomal subunit protein bL19 (132 aa).

Belongs to the bacterial ribosomal protein bL19 family.

Functionally, this protein is located at the 30S-50S ribosomal subunit interface and may play a role in the structure and function of the aminoacyl-tRNA binding site. This Methylobacterium radiotolerans (strain ATCC 27329 / DSM 1819 / JCM 2831 / NBRC 15690 / NCIMB 10815 / 0-1) protein is Large ribosomal subunit protein bL19.